The sequence spans 243 residues: Type III pantothenate kinase (243 aa).

An ATP-binding site is contributed by 7-14 (DLGNSRFK). Substrate-binding positions include Tyr91 and 98-101 (GVDR). The Proton acceptor role is filled by Asp100. Residue Thr122 participates in ATP binding. Position 172 (Thr172) interacts with substrate.

This sequence belongs to the type III pantothenate kinase family. As to quaternary structure, homodimer. Requires NH4(+) as cofactor. The cofactor is K(+).

The protein localises to the cytoplasm. The catalysed reaction is (R)-pantothenate + ATP = (R)-4'-phosphopantothenate + ADP + H(+). It functions in the pathway cofactor biosynthesis; coenzyme A biosynthesis; CoA from (R)-pantothenate: step 1/5. In terms of biological role, catalyzes the phosphorylation of pantothenate (Pan), the first step in CoA biosynthesis. This is Type III pantothenate kinase from Stenotrophomonas maltophilia (strain K279a).